Consider the following 133-residue polypeptide: Small ribosomal subunit protein uS8 (133 aa).

This sequence belongs to the universal ribosomal protein uS8 family. Part of the 30S ribosomal subunit. Contacts proteins S5 and S12.

Functionally, one of the primary rRNA binding proteins, it binds directly to 16S rRNA central domain where it helps coordinate assembly of the platform of the 30S subunit. In Lachnoclostridium phytofermentans (strain ATCC 700394 / DSM 18823 / ISDg) (Clostridium phytofermentans), this protein is Small ribosomal subunit protein uS8.